The following is a 284-amino-acid chain: MTAQLIDGKSIAASLRQQIAQRVAERRQQGLRTPGLAVILVGSDPASQVYVSHKRKDCEEVGFLSQAYDLPSETTQEALTDLIDRLNDDPAIDGVLLQLPLPEHLDASKLLERIRPDKDVDGFHPYNVGRLAQRIPLLRPCTPKGIMTLLESTGADLYGMDAVVVGASNIVGRPMAMELLLAGCTVTVTHRFTKDLAGHVGRADLVVVAAGKPGLVKGEWIKEGAIVIDVGINRQEDGKLVGDVVYETALPRAGWITPVPGGVGPMTRACLLENTLYAAETLHA.

NADP(+)-binding positions include Gly-166–Ser-168 and Ile-232.

This sequence belongs to the tetrahydrofolate dehydrogenase/cyclohydrolase family. In terms of assembly, homodimer.

The catalysed reaction is (6R)-5,10-methylene-5,6,7,8-tetrahydrofolate + NADP(+) = (6R)-5,10-methenyltetrahydrofolate + NADPH. It catalyses the reaction (6R)-5,10-methenyltetrahydrofolate + H2O = (6R)-10-formyltetrahydrofolate + H(+). The protein operates within one-carbon metabolism; tetrahydrofolate interconversion. Its function is as follows. Catalyzes the oxidation of 5,10-methylenetetrahydrofolate to 5,10-methenyltetrahydrofolate and then the hydrolysis of 5,10-methenyltetrahydrofolate to 10-formyltetrahydrofolate. In Pseudomonas fluorescens (strain Pf0-1), this protein is Bifunctional protein FolD.